The primary structure comprises 447 residues: Argininosuccinate synthase (447 aa).

Residues 17 to 25 (AFSGGLDTS) and Ala43 contribute to the ATP site. L-citrulline is bound at residue Tyr99. Residues Gly129 and Thr131 each coordinate ATP. Positions 131, 135, and 136 each coordinate L-aspartate. Asn135 contacts L-citrulline. Residue Asp136 participates in ATP binding. The L-citrulline site is built by Arg139 and Ser192. Asp194 lines the ATP pocket. Thr201, Glu203, and Glu280 together coordinate L-citrulline.

This sequence belongs to the argininosuccinate synthase family. Type 2 subfamily. Homotetramer.

It is found in the cytoplasm. It catalyses the reaction L-citrulline + L-aspartate + ATP = 2-(N(omega)-L-arginino)succinate + AMP + diphosphate + H(+). The protein operates within amino-acid biosynthesis; L-arginine biosynthesis; L-arginine from L-ornithine and carbamoyl phosphate: step 2/3. This Paracidovorax citrulli (strain AAC00-1) (Acidovorax citrulli) protein is Argininosuccinate synthase.